Consider the following 154-residue polypeptide: MAARLCCQLDTSRDVLCLRPVGAESCGRPFSGPLRALPPSHPSALPTDYGAHLSLRGLPVCAFSSAGPCALRFTSARCMETTVNAPRNLPKVLHKRTLGLSAMSTTKIETYFKDCVFKDWEELGEEIRLKVFVLGGCRHKLVCTPAPCNFFTSA.

The tract at residues 68–117 is mitochondrial targeting sequence; sequence PCALRFTSARCMETTVNAPRNLPKVLHKRTLGLSAMSTTKIETYFKDCVF.

Belongs to the orthohepadnavirus protein X family. May form homodimer. May interact with host CEBPA, CFLAR, CREB1, DDB1, E4F1, HBXIP, HSPD1/HSP60, NFKBIA, POLR2E and SMAD4. Interacts with host SMC5-SMC6 complex and induces its degradation. Interacts with host TRPC4AP; leading to prevent ubiquitination of TRPC4AP. Interacts with host PLSCR1; this interaction promotes ubiquitination and degradation of HBx and impairs HBx-mediated cell proliferation. In terms of processing, a fraction may be phosphorylated in insect cells and HepG2 cells, a human hepatoblastoma cell line. Phosphorylated in vitro by host protein kinase C or mitogen-activated protein kinase. N-acetylated in insect cells.

Its subcellular location is the host cytoplasm. It is found in the host nucleus. The protein resides in the host mitochondrion. Functionally, multifunctional protein that plays a role in silencing host antiviral defenses and promoting viral transcription. Does not seem to be essential for HBV infection. May be directly involved in development of cirrhosis and liver cancer (hepatocellular carcinoma). Most of cytosolic activities involve modulation of cytosolic calcium. The effect on apoptosis is controversial depending on the cell types in which the studies have been conducted. May induce apoptosis by localizing in mitochondria and causing loss of mitochondrial membrane potential. May also modulate apoptosis by binding host CFLAR, a key regulator of the death-inducing signaling complex (DISC). Promotes viral transcription by using the host E3 ubiquitin ligase DDB1 to target the SMC5-SMC6 complex to proteasomal degradation. This host complex would otherwise bind to viral episomal DNA, and prevents its transcription. Moderately stimulates transcription of many different viral and cellular transcription elements. Promoters and enhancers stimulated by HBx contain DNA binding sites for NF-kappa-B, AP-1, AP-2, c-EBP, ATF/CREB, or the calcium-activated factor NF-AT. This is Protein X from Chimpanzee hepatitis B virus (isolate United Kingdom/LSH/1988) (HBVcpz).